A 74-amino-acid polypeptide reads, in one-letter code: Probable molt-inhibiting hormone (74 aa).

Disulfide bonds link Cys6/Cys43, Cys23/Cys39, and Cys26/Cys52. Ala74 is subject to Alanine amide.

The protein localises to the secreted. Its function is as follows. Inhibits Y-organs where molting hormone (ecdysteroid) is secreted. A molting cycle is initiated when MIH secretion diminishes or stops. Has little or no hyperglycemic activity. The protein is Probable molt-inhibiting hormone of Jasus lalandii (Cape rock lobster).